The following is a 125-amino-acid chain: Large ribosomal subunit protein bL12 (125 aa).

This sequence belongs to the bacterial ribosomal protein bL12 family. Homodimer. Part of the ribosomal stalk of the 50S ribosomal subunit. Forms a multimeric L10(L12)X complex, where L10 forms an elongated spine to which 2 to 4 L12 dimers bind in a sequential fashion. Binds GTP-bound translation factors.

Functionally, forms part of the ribosomal stalk which helps the ribosome interact with GTP-bound translation factors. Is thus essential for accurate translation. The polypeptide is Large ribosomal subunit protein bL12 (Gluconobacter oxydans (strain 621H) (Gluconobacter suboxydans)).